A 564-amino-acid chain; its full sequence is Glutamyl-tRNA(Gln) amidotransferase subunit B, mitochondrial (564 aa).

The transit peptide at methionine 1–alanine 88 directs the protein to the mitochondrion. The disordered stretch occupies residues proline 26 to histidine 63.

It belongs to the GatB/GatE family. GatB subfamily. As to quaternary structure, subunit of the heterotrimeric GatCAB amidotransferase (AdT) complex, composed of A, B and C subunits.

The protein localises to the mitochondrion. It catalyses the reaction L-glutamyl-tRNA(Gln) + L-glutamine + ATP + H2O = L-glutaminyl-tRNA(Gln) + L-glutamate + ADP + phosphate + H(+). Allows the formation of correctly charged Gln-tRNA(Gln) through the transamidation of misacylated Glu-tRNA(Gln) in the mitochondria. The reaction takes place in the presence of glutamine and ATP through an activated gamma-phospho-Glu-tRNA(Gln). The chain is Glutamyl-tRNA(Gln) amidotransferase subunit B, mitochondrial from Ajellomyces capsulatus (strain G186AR / H82 / ATCC MYA-2454 / RMSCC 2432) (Darling's disease fungus).